Here is a 250-residue protein sequence, read N- to C-terminus: Eukaryotic translation initiation factor 3 subunit K (250 aa).

The PCI domain maps to 46 to 229 (FDCYANLALL…KENEARSEVK (184 aa)).

The protein belongs to the eIF-3 subunit K family. In terms of assembly, component of the eukaryotic translation initiation factor 3 (eIF-3) complex.

The protein localises to the cytoplasm. In terms of biological role, component of the eukaryotic translation initiation factor 3 (eIF-3) complex, which is involved in protein synthesis of a specialized repertoire of mRNAs and, together with other initiation factors, stimulates binding of mRNA and methionyl-tRNAi to the 40S ribosome. The eIF-3 complex specifically targets and initiates translation of a subset of mRNAs involved in cell proliferation. The protein is Eukaryotic translation initiation factor 3 subunit K of Emericella nidulans (strain FGSC A4 / ATCC 38163 / CBS 112.46 / NRRL 194 / M139) (Aspergillus nidulans).